The sequence spans 128 residues: Mini-ribonuclease 3 (128 aa).

Residue Asp17 is part of the active site.

This sequence belongs to the MrnC RNase family. As to quaternary structure, homodimer. Mg(2+) is required as a cofactor.

The protein resides in the cytoplasm. Involved in correct processing of both the 5' and 3' ends of 23S rRNA precursor. Processes 30S rRNA precursor transcript even in absence of ribonuclease 3 (Rnc); Rnc processes 30S rRNA into smaller rRNA precursors. The chain is Mini-ribonuclease 3 from Streptococcus pneumoniae (strain ATCC BAA-255 / R6).